The sequence spans 221 residues: Probable endo-1,4-beta-xylanase B (221 aa).

Residues 1 to 19 form the signal peptide; it reads MVSFSSLALALSTVVGVLA. A GH11 domain is found at 33-221; that stretch reads QLTHSQTGTK…SSGSATMTVS (189 aa). Glutamate 117 serves as the catalytic Nucleophile. Glutamate 208 serves as the catalytic Proton donor.

It belongs to the glycosyl hydrolase 11 (cellulase G) family.

The protein localises to the secreted. It carries out the reaction Endohydrolysis of (1-&gt;4)-beta-D-xylosidic linkages in xylans.. Its pathway is glycan degradation; xylan degradation. Its function is as follows. Endo-1,4-beta-xylanase involved in the hydrolysis of xylan, a major structural heterogeneous polysaccharide found in plant biomass representing the second most abundant polysaccharide in the biosphere, after cellulose. The polypeptide is Probable endo-1,4-beta-xylanase B (xlnB) (Aspergillus clavatus (strain ATCC 1007 / CBS 513.65 / DSM 816 / NCTC 3887 / NRRL 1 / QM 1276 / 107)).